A 363-amino-acid polypeptide reads, in one-letter code: Circumsporozoite protein (363 aa).

The signal sequence occupies residues 1-22; it reads MKNFILLAVSSILLVDLLPTHF. A compositionally biased stretch (polar residues) spans 48 to 57; the sequence is GAQQVRQSAS. The tract at residues 48–278 is disordered; the sequence is GAQQVRQSAS…GQNNQGANAP (231 aa). The span at 61–96 shows a compositional bias: basic and acidic residues; it reads GLGEKPKEGADKEKKKEKGKEKEEEPKKPNENKLKQ. The segment at 80 to 88 is required for the binding to heparan sulfate proteoglycans (HSPGs) on the surface of host hepatocytes; it reads KEKEEEPKK. The tract at residues 93 to 97 is region I; contains the proteolytic cleavage site; that stretch reads KLKQP. The stretch at 98–109 is one 1; approximate repeat; the sequence is NEGQPQAQGDGA. The segment at 98–241 is 12 X 12 AA approximate tandem repeats of N-A-G-Q-P-Q-A-Q-G-D-G-A; the sequence is NEGQPQAQGD…GQPQAQGDGA (144 aa). Tandem repeats lie at residues 110–121, 122–133, 134–145, 146–157, 158–169, 170–181, 182–193, 194–205, 206–217, 218–229, and 230–241. A compositionally biased stretch (gly residues) spans 248-259; sequence RNGGGAPAGGNE. Positions 260 to 277 are enriched in low complexity; sequence GNKQAGKGQGQNNQGANA. The TSP type-1 domain maps to 289–341; that stretch reads KIRSSVTTEWTPCSVTCGNGVRIRRKAHAGNKKAEDLTMDDLEVEACVMDKCA. Disulfide bonds link cysteine 301–cysteine 335 and cysteine 305–cysteine 340. Residue threonine 304 is glycosylated (O-linked (Fuc) threonine). Cysteine 340 carries GPI-anchor amidated cysteine lipidation. Residues 341–363 constitute a propeptide, removed in mature form; the sequence is AGIFNVVSNSLGLVILLVLALFN.

The protein belongs to the plasmodium circumsporozoite protein family. During host cell invasion, proteolytically cleaved at the cell membrane in the region I by a papain-like cysteine protease of parasite origin. Cleavage is triggered by the sporozoite contact with highly sulfated heparan sulfate proteoglycans (HSPGs) present on the host hepatocyte cell surface. Cleavage exposes the TSP type-1 (TSR) domain and is required for productive invasion of host hepatocytes but not for adhesion to the host cell membrane. Cleavage is dispensable for sporozoite development in the oocyst, motility and for traversal of host and vector cells. In terms of processing, O-glycosylated; maybe by POFUT2.

It is found in the cell membrane. The protein localises to the cytoplasm. Functionally, essential sporozoite protein. In the mosquito vector, required for sporozoite development in the oocyst, migration through the vector hemolymph and entry into the vector salivary glands. In the vertebrate host, required for sporozoite migration through the host dermis and infection of host hepatocytes. Binds to highly sulfated heparan sulfate proteoglycans (HSPGs) on the surface of host hepatocytes. In the vertebrate host, binds to highly sulfated heparan sulfate proteoglycans (HSPGs) on the surface of host hepatocytes and is required for sporozoite invasion of the host hepatocytes. In Plasmodium knowlesi (strain H), this protein is Circumsporozoite protein.